Reading from the N-terminus, the 193-residue chain is Oleosin S1-2 (193 aa).

Alanine 2 is modified (N-acetylalanine). Residues 2 to 39 (ADVRTHAHQVQVHPLRQHEGGIKVVYPQSGPSSTQVLA) form a polar region. 3 helical membrane-spanning segments follow: residues 37–57 (VLAV…AGLT), 66–86 (ILAF…AFVI), and 87–107 (GLAM…LSSM). A hydrophobic region spans residues 40 to 113 (VVAGVPVGGT…LSSMSWVLNH (74 aa)). Residues 139–193 (AGQRTKDAGQTIEDKAHDVRESKTYDVRDRDTKGHTASGGDRDTKTTREVRVATT) form a disordered region. Residues 142–193 (RTKDAGQTIEDKAHDVRESKTYDVRDRDTKGHTASGGDRDTKTTREVRVATT) show a composition bias toward basic and acidic residues.

It belongs to the oleosin family.

The protein resides in the lipid droplet. It is found in the membrane. Functionally, may have a structural role to stabilize the lipid body during desiccation of the seed by preventing coalescence of the oil. Probably interacts with both lipid and phospholipid moieties of lipid bodies. May also provide recognition signals for specific lipase anchorage in lipolysis during seedling growth. The polypeptide is Oleosin S1-2 (S1) (Brassica napus (Rape)).